The chain runs to 507 residues: Chromosomal replication initiator protein DnaA (507 aa).

A domain I, interacts with DnaA modulators region spans residues 1–72; that stretch reads MNNYNKIWEI…KKITKLKFEE (72 aa). The tract at residues 72–162 is domain II; the sequence is EKIIIEFVSE…KISFNKYNYG (91 aa). The interval 163-384 is domain III, AAA+ region; that stretch reads NTNPKYSFDN…GALLRLLNYA (222 aa). Residues Gly-207, Gly-209, Lys-210, and Thr-211 each contribute to the ATP site. The tract at residues 385-507 is domain IV, binds dsDNA; that stretch reads QTFGYDIDIN…LELILKKINS (123 aa).

This sequence belongs to the DnaA family. In terms of assembly, oligomerizes as a right-handed, spiral filament on DNA at oriC.

It is found in the cytoplasm. Plays an essential role in the initiation and regulation of chromosomal replication. ATP-DnaA binds to the origin of replication (oriC) to initiate formation of the DNA replication initiation complex once per cell cycle. Binds the DnaA box (a 9 base pair repeat at the origin) and separates the double-stranded (ds)DNA. Forms a right-handed helical filament on oriC DNA; dsDNA binds to the exterior of the filament while single-stranded (ss)DNA is stabiized in the filament's interior. The ATP-DnaA-oriC complex binds and stabilizes one strand of the AT-rich DNA unwinding element (DUE), permitting loading of DNA polymerase. After initiation quickly degrades to an ADP-DnaA complex that is not apt for DNA replication. Binds acidic phospholipids. This chain is Chromosomal replication initiator protein DnaA, found in Onion yellows phytoplasma (strain OY-M).